The primary structure comprises 161 residues: Protein-export protein SecB (161 aa).

Belongs to the SecB family. As to quaternary structure, homotetramer, a dimer of dimers. One homotetramer interacts with 1 SecA dimer.

It is found in the cytoplasm. Its function is as follows. One of the proteins required for the normal export of preproteins out of the cell cytoplasm. It is a molecular chaperone that binds to a subset of precursor proteins, maintaining them in a translocation-competent state. It also specifically binds to its receptor SecA. The sequence is that of Protein-export protein SecB from Bradyrhizobium diazoefficiens (strain JCM 10833 / BCRC 13528 / IAM 13628 / NBRC 14792 / USDA 110).